Here is a 393-residue protein sequence, read N- to C-terminus: SEC12-like protein 2 (393 aa).

Alanine 2 carries the N-acetylalanine modification. Topologically, residues 2 to 367 are cytoplasmic; that stretch reads ANQSTETNQP…EQKGDKPGVR (366 aa). The disordered stretch occupies residues 41–67; the sequence is EKSEDDDESSSSSSSSRSCIVLSGGGG. A Phosphoserine modification is found at serine 43. WD repeat units follow at residues 151–190, 193–231, 283–322, and 326–367; these read RDVG…TLLN, QAHS…AVAS, IKKN…TIQV, and AHLG…PGVR. Residues 368-388 traverse the membrane as a helical; Signal-anchor for type II membrane protein segment; the sequence is WWLLVLLIVLLYVVAYYYMKA. The Lumenal segment spans residues 389 to 393; it reads KGIIP.

As to quaternary structure, interacts with BZIP28.

The protein localises to the endoplasmic reticulum membrane. Its subcellular location is the golgi apparatus. It is found in the cis-Golgi network membrane. Functionally, required for the formation or budding of transport vesicles from the ER. The sequence is that of SEC12-like protein 2 (STL2P) from Arabidopsis thaliana (Mouse-ear cress).